The chain runs to 471 residues: F-box only protein 3 (471 aa).

An F-box domain is found at 10–56 (PLTLESLPTDPLLLILSFLDYRDLINCCYVSRRLSQLSSHDPLWRRH). An ApaG domain is found at 278–408 (VATTGDITVS…FHMACPTFRV (131 aa)). A compositionally biased stretch (acidic residues) spans 419–451 (EYEEMEEEEEEEEEEDEDDDSADMDESDEDDEE). The interval 419–455 (EYEEMEEEEEEEEEEDEDDDSADMDESDEDDEEERRR) is disordered.

Part of a SCF (SKP1-cullin-F-box) protein ligase complex SCF(FBXO3) consisting of FBXO3, SKP1, CUL1 and RBX1. Interacts with PML, interaction is direct and takes place either alone or within the SCF complex. In terms of assembly, (Microbial infection) Interacts (via ApaG domain) with Rift valley fever virus NSs helical filament; this interaction forms a filamentous E3 which mediates degradation of TFIIH complex through interaction with GT2H1.

It localises to the nucleus. The protein operates within protein modification; protein ubiquitination. Functionally, substrate recognition component of the SCF (SKP1-CUL1-F-box protein)-type E3 ubiquitin ligase complex, SCF(FBXO3), which mediates the ubiquitination and subsequent proteasomal degradation of target proteins. Mediates the ubiquitination of HIPK2 and probably that of EP300, leading to rapid degradation by the proteasome. In the presence of PML, HIPK2 ubiquitination still occurs, but degradation is prevented. PML, HIPK2 and FBXO3 may act synergically to activate p53/TP53-dependent transactivation. The SCF(FBXO3) also acts as a regulator of inflammation by mediating ubiquitination and degradation of FBXL2 in response to lipopolysaccharide (LPS). The SCF(FBXO3) complex specifically recognizes FBXL2 phosphorylated at 'Thr-404' and promotes its ubiquitination. Its function is as follows. (Microbial infection) Associates with the Rift valley fever virus NSs to form a remodeled E3 ligase that triggers efficient proteasomal degradation of targeted proteins. The filamentous E3 ligase targets the TFIIH complex leading to robust inhibition of antiviral immunity and enhances viral pathogenesis. In Homo sapiens (Human), this protein is F-box only protein 3.